The primary structure comprises 517 residues: MFS efflux transporter inpD (517 aa).

Residues methionine 1–glutamate 24 are disordered. 5 consecutive transmembrane segments (helical) span residues leucine 37–leucine 57, aspartate 59–glycine 79, isoleucine 89–proline 109, isoleucine 112–alanine 132, and isoleucine 151–isoleucine 171. N-linked (GlcNAc...) asparagine glycosylation occurs at asparagine 172. 9 helical membrane passes run tryptophan 178 to leucine 198, leucine 219 to glycine 239, asparagine 247 to valine 267, phenylalanine 292 to leucine 312, leucine 328 to isoleucine 348, valine 352 to leucine 372, valine 381 to valine 401, isoleucine 412 to serine 432, and alanine 485 to leucine 505.

This sequence belongs to the major facilitator superfamily.

The protein resides in the cell membrane. Its function is as follows. MFS efflux transporter; part of the inp gene cluster that mediates the biosynthesis of fellutamide B, a mycotoxin that acts as a proteasome inhibitor. In the first step of fellutabmide B biosynthesis inpC activates 3-hydroxydodecanoic acid to generate 3-hydroxydodecanoyl-AMP that is then loaded onto the T0 domain of inpB. The 3-hydroxydodecanoyl-S-phosphopantetheinyl-T0 is sequentially extended with L-Asn and L-Gln by the two CAT modules of inpB. The linear lipodipeptide from inpB is then transferred onto inpA for the addition of the third amino acid, L-Leu. Reductive releasing of the lipotripeptide by the TE domain of inpA produces (2S)-fellutamide B. InpF might be involved in the release and transfer of the lipodipeptide from inpB to inpA. The inp cluster-encoded proteasome subunit inpE confers resistance to internally produced fellutamides. The MFS efflux transporter inpD may contribute to fellutamide resistance as well. The polypeptide is MFS efflux transporter inpD (Emericella nidulans (strain FGSC A4 / ATCC 38163 / CBS 112.46 / NRRL 194 / M139) (Aspergillus nidulans)).